A 98-amino-acid polypeptide reads, in one-letter code: UPF0251 protein SO_0727 (98 aa).

It belongs to the UPF0251 family.

This is UPF0251 protein SO_0727 from Shewanella oneidensis (strain ATCC 700550 / JCM 31522 / CIP 106686 / LMG 19005 / NCIMB 14063 / MR-1).